The sequence spans 181 residues: Adenine phosphoribosyltransferase (181 aa).

The protein belongs to the purine/pyrimidine phosphoribosyltransferase family. As to quaternary structure, homodimer.

It localises to the cytoplasm. The catalysed reaction is AMP + diphosphate = 5-phospho-alpha-D-ribose 1-diphosphate + adenine. Its pathway is purine metabolism; AMP biosynthesis via salvage pathway; AMP from adenine: step 1/1. Its function is as follows. Catalyzes a salvage reaction resulting in the formation of AMP, that is energically less costly than de novo synthesis. In Rhizobium leguminosarum bv. trifolii (strain WSM2304), this protein is Adenine phosphoribosyltransferase.